The sequence spans 179 residues: Ribosome maturation factor RimM (179 aa).

The PRC barrel domain maps to 100 to 176 (KEEFHLLELI…FLIINPPNGL (77 aa)).

This sequence belongs to the RimM family. As to quaternary structure, binds ribosomal protein uS19.

The protein resides in the cytoplasm. In terms of biological role, an accessory protein needed during the final step in the assembly of 30S ribosomal subunit, possibly for assembly of the head region. Essential for efficient processing of 16S rRNA. May be needed both before and after RbfA during the maturation of 16S rRNA. It has affinity for free ribosomal 30S subunits but not for 70S ribosomes. This is Ribosome maturation factor RimM from Prochlorococcus marinus (strain MIT 9312).